A 241-amino-acid chain; its full sequence is Triosephosphate isomerase (241 aa).

Residue 9 to 11 (NWK) coordinates substrate. His-88 functions as the Electrophile in the catalytic mechanism. Residue Glu-158 is the Proton acceptor of the active site. Substrate-binding positions include Gly-164, Ser-203, and 224 to 225 (GG).

The protein belongs to the triosephosphate isomerase family. As to quaternary structure, homodimer.

Its subcellular location is the cytoplasm. It catalyses the reaction D-glyceraldehyde 3-phosphate = dihydroxyacetone phosphate. It functions in the pathway carbohydrate biosynthesis; gluconeogenesis. It participates in carbohydrate degradation; glycolysis; D-glyceraldehyde 3-phosphate from glycerone phosphate: step 1/1. In terms of biological role, involved in the gluconeogenesis. Catalyzes stereospecifically the conversion of dihydroxyacetone phosphate (DHAP) to D-glyceraldehyde-3-phosphate (G3P). The chain is Triosephosphate isomerase from Dichelobacter nodosus (strain VCS1703A).